Consider the following 241-residue polypeptide: MTSETPKQYGRVMLKISGEALMGDQGFGLNPPTVARIANEVDSVAKMGVEVCMVIGGGNIFRGLQGSAQGMERTTADYMGMLATVMNALAMQSALEALGHHCRVISAIRMDEVCEPYIRRRAIRHLEKKRIVIFAAGTGNPYFTTDTAATLRASEMNCEAIFKGTKVDGVYDKDPVKHADAKRYGDVSYDEVLQKHLGVMDASAIALARDNKLPIIVFSLDAPGGFRSILAGSGTYTRVHV.

15 to 18 (KISG) contributes to the ATP binding site. The tract at residues 23–28 (GDQGFG) is involved in allosteric activation by GTP. UMP is bound at residue glycine 57. 2 residues coordinate ATP: glycine 58 and arginine 62. Residues aspartate 77 and 138-145 (TGNPYFTT) contribute to the UMP site. ATP-binding residues include threonine 165, tyrosine 171, and aspartate 174.

It belongs to the UMP kinase family. As to quaternary structure, homohexamer.

The protein localises to the cytoplasm. The enzyme catalyses UMP + ATP = UDP + ADP. It functions in the pathway pyrimidine metabolism; CTP biosynthesis via de novo pathway; UDP from UMP (UMPK route): step 1/1. Its activity is regulated as follows. Allosterically activated by GTP. Inhibited by UTP. Functionally, catalyzes the reversible phosphorylation of UMP to UDP. This Paracoccus zeaxanthinifaciens protein is Uridylate kinase.